The chain runs to 408 residues: MKNQLIDRLTRYTTIDTQSDPKSTTTPSTEKQWDLLHLLEKELQQLGLPTDLDENGYLFATLESNIDADVPTVGFLAHVDTSPDFNASNVKPQIIENYDGKPYKLGNTKRVLDPKVFPELNSLVGHTLMVTDGTSLLGADDKAGIVEIMEAICYLQEHPEIKHGTIRIGFTPDEEIGRGPHKFDVDRFNADFAYTMDGSQYGELQYESFNAAEAVITCHGVNVHPGSAKNAMVNAIRLGEQFDSLLPDSEVPERTEGYEGFYHLMNFEGTVEKATLQYIIRDHDKKQFELRKKRILEIRDDINAHFENYPVKVDISDQYFNMAEKILPLPHIIDIPKRVFAKLDIPANTEPIRGGTDGSQLSFMGLPTPNIFTGCGNFHGPYEYASIDVMEKAVQVIIGIVEDIAENH.

His78 lines the Zn(2+) pocket. Residue Asp80 is part of the active site. Zn(2+) is bound at residue Asp140. Catalysis depends on Glu174, which acts as the Proton acceptor. Glu175, Asp197, and His379 together coordinate Zn(2+).

The protein belongs to the peptidase M20B family. It depends on Zn(2+) as a cofactor.

It localises to the cytoplasm. It carries out the reaction Release of the N-terminal residue from a tripeptide.. In terms of biological role, cleaves the N-terminal amino acid of tripeptides. The chain is Peptidase T from Staphylococcus aureus (strain Mu3 / ATCC 700698).